The following is a 345-amino-acid chain: MNLQEKIEDLRKRTLSDLLSVADEKTLNNLRTVMLGKKGELTEILKGMKDLTNEERPVIGALANAFRDEFGAKFEAKKLEIEQAVMNAALESETLDVTLPGKAQKKGSRHILTQTQEEIEEIFLGMGYEIVDGYEVETDHYNFERMNLPKDHPARDMQDTFYITNEVLLRTHTSPMQARTMDAHDFSKGGLRMIAPGRVYRRDTDDATHSHQFHQIEGLVVDKNITMADLKGTLDLVMKKMFGQERELRWRPSYFPFTEPSVEVDISCFKCGGKGCNVCKHTGWIEILGAGMVHPNVLEMSGLDSSVYSGFAFGLGQERIAMLRYGINDIRGFYQGDVRFLEQFD.

Residue Glu259 coordinates Mg(2+).

This sequence belongs to the class-II aminoacyl-tRNA synthetase family. Phe-tRNA synthetase alpha subunit type 1 subfamily. In terms of assembly, tetramer of two alpha and two beta subunits. Mg(2+) serves as cofactor.

Its subcellular location is the cytoplasm. It catalyses the reaction tRNA(Phe) + L-phenylalanine + ATP = L-phenylalanyl-tRNA(Phe) + AMP + diphosphate + H(+). The protein is Phenylalanine--tRNA ligase alpha subunit of Lactococcus lactis subsp. cremoris (strain MG1363).